A 213-amino-acid polypeptide reads, in one-letter code: ATP synthase peripheral stalk subunit OSCP, mitochondrial (213 aa).

Residues 1 to 23 (MAAPATSVLSRQVRSFSTSVVRP) constitute a mitochondrion transit peptide. Residues 5-23 (ATSVLSRQVRSFSTSVVRP) carry the SIFI-degron motif. Residues Lys60, Lys70, and Lys73 each carry the N6-acetyllysine modification. N6-succinyllysine is present on Lys90. 2 positions are modified to N6-acetyllysine; alternate: Lys100 and Lys158. Lys100 and Lys158 each carry N6-succinyllysine; alternate. An N6-acetyllysine mark is found at Lys176 and Lys192. Lys199 bears the N6-succinyllysine mark.

The protein belongs to the ATPase delta chain family. Component of the ATP synthase complex composed at least of ATP5F1A/subunit alpha, ATP5F1B/subunit beta, ATP5MC1/subunit c (homooctomer), MT-ATP6/subunit a, MT-ATP8/subunit 8, ATP5ME/subunit e, ATP5MF/subunit f, ATP5MG/subunit g, ATP5MK/subunit k, ATP5MJ/subunit j, ATP5F1C/subunit gamma, ATP5F1D/subunit delta, ATP5F1E/subunit epsilon, ATP5PF/subunit F6, ATP5PB/subunit b, ATP5PD/subunit d, ATP5PO/subunit OSCP. ATP synthase complex consists of a soluble F(1) head domain (subunits alpha(3) and beta(3)) - the catalytic core - and a membrane F(0) domain - the membrane proton channel (subunits c, a, 8, e, f, g, k and j). These two domains are linked by a central stalk (subunits gamma, delta, and epsilon) rotating inside the F1 region and a stationary peripheral stalk (subunits F6, b, d, and OSCP). In response to mitochondrial stress, the precursor protein is ubiquitinated by the SIFI complex in the cytoplasm before mitochondrial import, leading to its degradation. Within the SIFI complex, UBR4 initiates ubiquitin chain that are further elongated or branched by KCMF1. Expressed by the principal cells of the epididymis. Detected in flagella of epididymal sperm (at protein level).

Its subcellular location is the mitochondrion. It is found in the mitochondrion inner membrane. Subunit OSCP, of the mitochondrial membrane ATP synthase complex (F(1)F(0) ATP synthase or Complex V) that produces ATP from ADP in the presence of a proton gradient across the membrane which is generated by electron transport complexes of the respiratory chain. ATP synthase complex consist of a soluble F(1) head domain - the catalytic core - and a membrane F(1) domain - the membrane proton channel. These two domains are linked by a central stalk rotating inside the F(1) region and a stationary peripheral stalk. During catalysis, ATP synthesis in the catalytic domain of F(1) is coupled via a rotary mechanism of the central stalk subunits to proton translocation. In vivo, can only synthesize ATP although its ATP hydrolase activity can be activated artificially in vitro. Part of the complex F(0) domain. Part of the complex F(0) domain and the peripheric stalk, which acts as a stator to hold the catalytic alpha(3)beta(3) subcomplex and subunit a/ATP6 static relative to the rotary elements. This is ATP synthase peripheral stalk subunit OSCP, mitochondrial from Rattus norvegicus (Rat).